The following is an 87-amino-acid chain: UPF0335 protein Meso_3367 (87 aa).

The protein belongs to the UPF0335 family.

This Chelativorans sp. (strain BNC1) protein is UPF0335 protein Meso_3367.